Here is a 189-residue protein sequence, read N- to C-terminus: UPF0301 protein RrIowa_0061 (189 aa).

Belongs to the UPF0301 (AlgH) family.

In Rickettsia rickettsii (strain Iowa), this protein is UPF0301 protein RrIowa_0061.